We begin with the raw amino-acid sequence, 140 residues long: L-fucose mutarotase (140 aa).

Catalysis depends on His22, which acts as the Proton donor. Substrate-binding positions include Asp30, Arg107, and 129–131 (YGN).

This sequence belongs to the RbsD / FucU family. FucU mutarotase subfamily. Homodecamer.

It is found in the cytoplasm. It carries out the reaction alpha-L-fucose = beta-L-fucose. It functions in the pathway carbohydrate metabolism; L-fucose metabolism. Its function is as follows. Involved in the anomeric conversion of L-fucose. The sequence is that of L-fucose mutarotase from Salmonella arizonae (strain ATCC BAA-731 / CDC346-86 / RSK2980).